Here is a 396-residue protein sequence, read N- to C-terminus: Obg-like ATPase 1 (396 aa).

The OBG-type G domain maps to 23-283; sequence LKIGIVGLPN…LSAEERQKYL (261 aa). 32–37 contacts ATP; that stretch reads NVGKST. The Mg(2+) site is built by Ser-36 and Thr-56. Residue Leu-231 participates in ATP binding. The Nuclear export signal signature appears at 267 to 274; the sequence is LELKLQEL. At Lys-294 the chain carries N6-acetyllysine. A TGS domain is found at 304 to 387; that stretch reads QLEYFFTAGP…EDGDIIFFKF (84 aa).

This sequence belongs to the TRAFAC class OBG-HflX-like GTPase superfamily. OBG GTPase family. YchF/OLA1 subfamily. In terms of assembly, monomer. Mg(2+) serves as cofactor. Expressed in all tissues tested but its expression is more abundant in testis, liver, lung, and brain. Overexpressed in several malignancies, including cancers of the colon, rectum, ovary, lung, stomach, and uterus.

The protein resides in the cytoplasm. Its subcellular location is the nucleus. It localises to the nucleolus. In terms of biological role, hydrolyzes ATP, and can also hydrolyze GTP with lower efficiency. Has lower affinity for GTP. The protein is Obg-like ATPase 1 of Homo sapiens (Human).